The following is a 194-amino-acid chain: NADH-quinone oxidoreductase subunit B 1 (194 aa).

[4Fe-4S] cluster contacts are provided by Cys-47, Cys-48, Cys-113, and Cys-142.

It belongs to the complex I 20 kDa subunit family. In terms of assembly, NDH-1 is composed of 14 different subunits. Subunits NuoB, C, D, E, F, and G constitute the peripheral sector of the complex. The cofactor is [4Fe-4S] cluster.

It is found in the cell inner membrane. It carries out the reaction a quinone + NADH + 5 H(+)(in) = a quinol + NAD(+) + 4 H(+)(out). Functionally, NDH-1 shuttles electrons from NADH, via FMN and iron-sulfur (Fe-S) centers, to quinones in the respiratory chain. The immediate electron acceptor for the enzyme in this species is believed to be ubiquinone. Couples the redox reaction to proton translocation (for every two electrons transferred, four hydrogen ions are translocated across the cytoplasmic membrane), and thus conserves the redox energy in a proton gradient. The polypeptide is NADH-quinone oxidoreductase subunit B 1 (Sorangium cellulosum (strain So ce56) (Polyangium cellulosum (strain So ce56))).